The sequence spans 77 residues: Major pilus subunit operon regulatory protein (77 aa).

It to E.coli AfaF and DaaF.

Its function is as follows. Plays a role in the inhibition of methylation at the GATC1028 site located in the regulatory region upstream of the pabA promoter. May, in conjunction with the Mbf (methylation blocking factor), inhibits deoxyadenosine methylase from methylating the GATC1028 site. The sequence is that of Major pilus subunit operon regulatory protein (papI) from Escherichia coli.